The primary structure comprises 413 residues: Multifunctional CCA protein (413 aa).

ATP is bound by residues Gly8 and Arg11. CTP contacts are provided by Gly8 and Arg11. Residues Asp21 and Asp23 each coordinate Mg(2+). 3 residues coordinate ATP: Arg91, Arg143, and Arg146. CTP-binding residues include Arg91, Arg143, and Arg146. In terms of domain architecture, HD spans 232 to 333; it reads TGVHVMMVID…VRLLERADAL (102 aa).

Belongs to the tRNA nucleotidyltransferase/poly(A) polymerase family. Bacterial CCA-adding enzyme type 1 subfamily. Monomer. Can also form homodimers and oligomers. Mg(2+) is required as a cofactor. It depends on Ni(2+) as a cofactor.

It catalyses the reaction a tRNA precursor + 2 CTP + ATP = a tRNA with a 3' CCA end + 3 diphosphate. The catalysed reaction is a tRNA with a 3' CCA end + 2 CTP + ATP = a tRNA with a 3' CCACCA end + 3 diphosphate. Catalyzes the addition and repair of the essential 3'-terminal CCA sequence in tRNAs without using a nucleic acid template. Adds these three nucleotides in the order of C, C, and A to the tRNA nucleotide-73, using CTP and ATP as substrates and producing inorganic pyrophosphate. tRNA 3'-terminal CCA addition is required both for tRNA processing and repair. Also involved in tRNA surveillance by mediating tandem CCA addition to generate a CCACCA at the 3' terminus of unstable tRNAs. While stable tRNAs receive only 3'-terminal CCA, unstable tRNAs are marked with CCACCA and rapidly degraded. The sequence is that of Multifunctional CCA protein from Burkholderia mallei (strain NCTC 10247).